The primary structure comprises 416 residues: Iron/alpha-ketoglutarate-dependent dioxygenase asqJ (416 aa).

The tract at residues 1-53 is disordered; sequence MGYPKAFTSSDSEPEPDLSRDLGNPVMGNPGVVSRSSSTVAQHSVRNNPTGPD. The span at 34 to 50 shows a compositional bias: polar residues; that stretch reads SRSSSTVAQHSVRNNPT. The Fe cation site is built by histidine 242, aspartate 244, and histidine 319.

It belongs to the PhyH family. As to quaternary structure, homodimer. It depends on Fe cation as a cofactor.

The catalysed reaction is (-)-4'-methoxycyclopeptine + 2-oxoglutarate + O2 = (Z)-4'-methoxydehydrocyclopeptine + succinate + CO2 + H2O. It catalyses the reaction (Z)-4'-methoxydehydrocyclopeptine + 2-oxoglutarate + O2 = (-)-4'-methoxycyclopenine + succinate + CO2. It carries out the reaction (-)-cyclopeptine + 2-oxoglutarate + O2 = (Z)-dehydrocyclopeptine + succinate + CO2 + H2O. The enzyme catalyses (Z)-dehydrocyclopeptine + 2-oxoglutarate + O2 = (-)-cyclopenine + succinate + CO2. Its pathway is secondary metabolite biosynthesis. The protein operates within alkaloid biosynthesis. It participates in mycotoxin biosynthesis. In terms of biological role, iron/alpha-ketoglutarate-dependent dioxygenase; part of the gene cluster that mediates the biosynthesis of the aspoquinolone mycotoxins. Within the pathway, the iron/alpha-ketoglutarate-dependent dioxygenase asqJ acts as a (-)-cyclopenine synthase that converts 4'-methoxycyclopeptin into 4'-methoxydehydrocyclopeptin through dehydrogenation to form a double bond between C-alpha and C-beta of the O-methyltyrosine side chain. AsqJ is a very unique dioxygenase which is capable of catalyzing radical-mediated dehydrogenation and epoxidation reactions sequentially on a 6,7-benzo-diazepinedione substrate in the 4'-methoxyviridicatin biosynthetic pathway. AsqJ is also capable of converting cyclopeptin into dehydrocyclopeptin. The first step of the pathway is catalyzed by the nonribosomal peptide synthetase asqK that condenses anthranilic acid and O-methyl-L-tyrosine to produce 4'-methoxycyclopeptin. 4'-methoxycyclopeptin is then converted to 4'-methoxydehydrocyclopeptin by the ketoglutarate-dependent dioxygenase asqJ. AsqJ also converts its first product 4'-methoxydehydrocyclopeptin to 4'-methoxycyclopenin. The following conversion of 4'-methoxycyclopenin into 4'-methoxyviridicatin is catalyzed by the cyclopenase asqI. 4'-methoxyviridicatin is the precursor of quinolone natural products, and is further converted to quinolinone B. The prenyltransferase asqH1 then catalyzes the canonical Friedel-Crafts alkylation of quinolinone B with dimethylallyl cation to yield dimethylallyl quinolone, which is subjected to FAD-dependent dehydrogenation by the FAD-linked oxidoreductase asqF to yield conjugated aryl diene. The delta(3') double bond then serves as the site of the second alkylation with DMAPP catalyzed by the prenyltransferase asqH2 to yield a carbenium ion intermediate, which can be attacked by H(2)O to yield a styrenyl quinolone containing a C3'-hydroxyprenyl chain. The FAD-dependent monooxygenase asqG performs epoxidation of the terminal C7'-C8' olefin. Finally, after dehydratation of the epoxide at C3 by asqC, the quinolone epoxide rearrangement protein asqO catalyzes an enzymatic 3-exo-tet cyclization to yield the cyclopropyl-THF ring system in aspoquinolone. The polypeptide is Iron/alpha-ketoglutarate-dependent dioxygenase asqJ (Emericella nidulans (strain FGSC A4 / ATCC 38163 / CBS 112.46 / NRRL 194 / M139) (Aspergillus nidulans)).